A 385-amino-acid polypeptide reads, in one-letter code: Period circadian protein (385 aa).

3 disordered regions span residues Thr28–Val121, Gly169–Glu189, and Ser322–Gly351. The segment covering Ser71–Thr93 has biased composition (low complexity). Residues Gly94 to Ser115 are compositionally biased toward gly residues. A compositionally biased stretch (polar residues) spans His340–Gly351.

Forms a heterodimer with timeless (TIM); the complex then translocates into the nucleus. In terms of processing, phosphorylated with a circadian rhythmicity, probably by the double-time protein (dbt). Phosphorylation could be implicated in the stability of per monomer and in the formation of heterodimer per-tim.

Its subcellular location is the nucleus. The protein localises to the cytoplasm. It localises to the perinuclear region. Essential for biological clock functions. Determines the period length of circadian and ultradian rhythms; an increase in PER dosage leads to shortened circadian rhythms and a decrease leads to lengthened circadian rhythms. Essential for the circadian rhythmicity of locomotor activity, eclosion behavior, and for the rhythmic component of the male courtship song that originates in the thoracic nervous system. The biological cycle depends on the rhythmic formation and nuclear localization of the TIM-PER complex. Light induces the degradation of TIM, which promotes elimination of PER. Nuclear activity of the heterodimer coordinatively regulates PER and TIM transcription through a negative feedback loop. Behaves as a negative element in circadian transcriptional loop. Does not appear to bind DNA, suggesting indirect transcriptional inhibition. This chain is Period circadian protein (per), found in Drosophila nebulosa (Fruit fly).